A 30-amino-acid polypeptide reads, in one-letter code: Dermaseptin-J10 (30 aa).

As to expression, expressed by the skin glands.

The protein resides in the secreted. Functionally, has antimicrobial activity. This chain is Dermaseptin-J10, found in Phasmahyla jandaia (Jandaia leaf frog).